The sequence spans 553 residues: Urocanate hydratase (553 aa).

NAD(+) contacts are provided by residues 45 to 46 (GG), Gln123, 169 to 171 (GMG), Asp189, Arg194, 235 to 236 (NA), 256 to 260 (QTSAH), 266 to 267 (YV), Tyr315, and Gly485.

It belongs to the urocanase family. Requires NAD(+) as cofactor.

Its subcellular location is the cytoplasm. The catalysed reaction is 4-imidazolone-5-propanoate = trans-urocanate + H2O. Its pathway is amino-acid degradation; L-histidine degradation into L-glutamate; N-formimidoyl-L-glutamate from L-histidine: step 2/3. Functionally, catalyzes the conversion of urocanate to 4-imidazolone-5-propionate. In Staphylococcus aureus (strain COL), this protein is Urocanate hydratase.